The following is a 387-amino-acid chain: DNA-damage-repair/toleration protein 111 (387 aa).

Positions 1-213 (MLGGLYGDLP…TSGLGVGAGG (213 aa)) are disordered. Residues 19–29 (SGNSSSVWSSS) show a composition bias toward low complexity. The segment covering 103-158 (DPARPNDYEEYKREKKRKATEAEMKREMDKRRQEDEERDKREREEREKERERDNSD) has biased composition (basic and acidic residues). The 47-residue stretch at 214-260 (QMTAAQRMMAKMGWKQGQGLGKSEQGITTPLMAKKTDRRAGVIVNAS) folds into the G-patch domain. The 87-residue stretch at 283 to 369 (RVLLLRNMVG…RTVRATFYDE (87 aa)) folds into the RRM domain.

As to quaternary structure, component of the SWAP1-SFPS-RRC1 splicing factor complex which modulates pre-mRNA splicing to promote photomorphogenesis. Interacts with SWAP1 in a light-independent manner. Associates with the photoreceptor phytochrome B (phyB) in nuclear photobodies upon response to red light. Binds to the splicing factor 1 SF1, involved in 3' splicing site recognition. Expressed ubiquitously with highest levels in dry seeds and in cells surrounding the base of trichomes and guard cells.

The protein localises to the nucleus. It localises to the nucleus speckle. Functionally, as a member of the SWAP1-SFPS-RRC1 splicing factor complex, modulates photomorphogenesis by regulating the gene expression and pre-messenger RNA (mRNA) alternative splicing of a large number of genes, including those involved in plant responses to light signaling, probably by helping in the 3' splice site determination. Associates with and regulates EARLY FLOWERING 3 (ELF3) mRNA processing, a key component of the circadian clock also involved in photomorphogenesis. Required for light-regulated (red, far-red and blue lights) photomorphogenesis in a PHYB- and PHYTOCHROME INTERACTING FACTORS- (PIFs) dependent manner. Promotes flowering under both short (SD) and long days (LD). Controls abscisic acid (ABA) sensitivity during seed development, stomatal responsiveness and germination by monitoring ABI3 splicing, upstream of the splicing factor SUPPRESSOR OF ABI3-ABI5. Seems to be involved in the resistance to UV light and chemical DNA-damaging agents. The chain is DNA-damage-repair/toleration protein 111 from Arabidopsis thaliana (Mouse-ear cress).